Reading from the N-terminus, the 911-residue chain is Alpha-actinin-4 (911 aa).

The segment at 1 to 269 (MVDYHAANQS…YVSSFYHAFS (269 aa)) is actin-binding. Positions 8-31 (NQSYQYGPSSGSNGAGGGGTMGDY) are disordered. Residues 12–26 (QYGPSSGSNGAGGGG) are interaction with VCL. The residue at position 31 (Tyr-31) is a Phosphotyrosine. An interaction with VCL region spans residues 40–61 (RDLLLDPAWEKQQRKTFTAWCN). Calponin-homology (CH) domains lie at 50 to 154 (KQQR…LRFA) and 163 to 269 (TSAK…HAFS). Residues 84–88 (LMLLL) carry the LXXLL motif motif. The interval 108–126 (KINNVNKALDFIASKGVKL) is interaction with VCL. At Lys-114 the chain carries N6-acetyllysine. The segment at 177 to 192 (TAPYKNVNVQNFHISW) is polyphosphoinositide (PIP2)-binding. At Lys-214 the chain carries N6-acetyllysine. Thr-249 carries the phosphothreonine modification. Spectrin repeat units follow at residues 293–403 (HLME…WLLN), 413–518 (HLAE…ALEK), 528–639 (QLHL…ALLE), and 649–752 (HLRR…EVEN). N6-acetyllysine is present on residues Lys-592 and Lys-625. Ser-696 is modified (phosphoserine). Positions 736–911 (WEQLLTTIAR…STALYGESDL (176 aa)) are mediates interaction with MICALL2. EF-hand domains lie at 765–800 (EQMQEFRASFNHFDKDHGGALGPEEFKACLISLGYD) and 806–841 (QGDAEFNRIMSVVDPNHSGLVTFQAFIDFMSRETTD). Asp-778 lines the Ca(2+) pocket. Lys-779 carries the post-translational modification N6-acetyllysine. 2 residues coordinate Ca(2+): Asp-780 and Glu-789. Residue Lys-859 is modified to N6-acetyllysine. Ser-909 is subject to Phosphoserine.

It belongs to the alpha-actinin family. Homodimer; antiparallel. Identified in a IGF2BP1-dependent mRNP granule complex containing untranslated mRNAs. Component of the CART complex, at least composed of ACTN4, HGS/HRS, MYO5B and TRIM3. Binds TRIM3 at the N-terminus. Interacts with MAGI1. Interacts with PDLIM2. Identified in a complex with CASK, IQGAP1, MAGI2, NPHS1, SPTAN1 and SPTBN1. Interacts with MICALL2 (preferentially in opened conformation); stimulated by RAB13 activation. Interacts with PPARG and RARA. Binds to VCL; this interaction triggers VCL conformational changes. Interacts with SEPTIN14. Interacts with IGSF8.

It is found in the nucleus. It localises to the cytoplasm. Its subcellular location is the cell junction. The protein resides in the cytoskeleton. The protein localises to the stress fiber. It is found in the perinuclear region. Its function is as follows. F-actin cross-linking protein which is thought to anchor actin to a variety of intracellular structures. This is a bundling protein. Probably involved in vesicular trafficking via its association with the CART complex. The CART complex is necessary for efficient transferrin receptor recycling but not for EGFR degradation. Involved in tight junction assembly in epithelial cells probably through interaction with MICALL2. Links MICALL2 to the actin cytoskeleton and recruits it to the tight junctions. May also function as a transcriptional coactivator, stimulating transcription mediated by the nuclear hormone receptors PPARG and RARA. Association with IGSF8 regulates the immune synapse formation and is required for efficient T-cell activation. The protein is Alpha-actinin-4 of Bos taurus (Bovine).